The sequence spans 166 residues: Small ribosomal subunit protein uS5 (166 aa).

Positions 11 to 74 (LNEKLIAVNR…EKARRNMFTI (64 aa)) constitute an S5 DRBM domain.

This sequence belongs to the universal ribosomal protein uS5 family. Part of the 30S ribosomal subunit. Contacts proteins S4 and S8.

Functionally, with S4 and S12 plays an important role in translational accuracy. In terms of biological role, located at the back of the 30S subunit body where it stabilizes the conformation of the head with respect to the body. The protein is Small ribosomal subunit protein uS5 of Aliivibrio salmonicida (strain LFI1238) (Vibrio salmonicida (strain LFI1238)).